A 342-amino-acid chain; its full sequence is tRNA N6-adenosine threonylcarbamoyltransferase (342 aa).

Fe cation is bound by residues His111 and His115. Substrate contacts are provided by residues 133–137 (VVSGG), Asp166, Gly179, Asp183, and Asn273. Asp301 serves as a coordination point for Fe cation.

Belongs to the KAE1 / TsaD family. It depends on Fe(2+) as a cofactor.

Its subcellular location is the cytoplasm. The enzyme catalyses L-threonylcarbamoyladenylate + adenosine(37) in tRNA = N(6)-L-threonylcarbamoyladenosine(37) in tRNA + AMP + H(+). Functionally, required for the formation of a threonylcarbamoyl group on adenosine at position 37 (t(6)A37) in tRNAs that read codons beginning with adenine. Is involved in the transfer of the threonylcarbamoyl moiety of threonylcarbamoyl-AMP (TC-AMP) to the N6 group of A37, together with TsaE and TsaB. TsaD likely plays a direct catalytic role in this reaction. This chain is tRNA N6-adenosine threonylcarbamoyltransferase, found in Trichlorobacter lovleyi (strain ATCC BAA-1151 / DSM 17278 / SZ) (Geobacter lovleyi).